Consider the following 332-residue polypeptide: Protoheme IX farnesyltransferase (332 aa).

The next 7 helical transmembrane spans lie at 63 to 83 (LICTLGGGALAAAAAGALNCL), 109 to 129 (TVFLGAVSCTLAAAMLLISGV), 132 to 152 (LAAGLTLLGLCSYVILYTIIL), 160 to 180 (IVFGGVAGAIPPLVGASAATG), 188 to 208 (WLFSLVMLWTPAHFWALAILL), 245 to 265 (ILGVFALPEGGILYLIMLLPF), and 286 to 306 (AKGLFRWSILYMFGICLLLLI).

This sequence belongs to the UbiA prenyltransferase family. Protoheme IX farnesyltransferase subfamily.

The protein localises to the cell inner membrane. It carries out the reaction heme b + (2E,6E)-farnesyl diphosphate + H2O = Fe(II)-heme o + diphosphate. Its pathway is porphyrin-containing compound metabolism; heme O biosynthesis; heme O from protoheme: step 1/1. In terms of biological role, converts heme B (protoheme IX) to heme O by substitution of the vinyl group on carbon 2 of heme B porphyrin ring with a hydroxyethyl farnesyl side group. This chain is Protoheme IX farnesyltransferase, found in Prochlorococcus marinus subsp. pastoris (strain CCMP1986 / NIES-2087 / MED4).